Consider the following 364-residue polypeptide: Mitogen-activated protein kinase 11 (364 aa).

The region spanning 24–308 is the Protein kinase domain; the sequence is LQGLRPVGSG…AAEALAHAYF (285 aa). ATP contacts are provided by residues 30–38 and lysine 53; that span reads VGSGAYGSV. Glutamate 71 lines the nilotinib pocket. Catalysis depends on aspartate 150, which acts as the Proton acceptor. Threonine 180 is subject to Phosphothreonine; by MAP2K3, MAP2K4 and MAP2K6. The TXY signature appears at 180 to 182; the sequence is TGY. Position 182 is a phosphotyrosine; by MAP2K3, MAP2K4 and MAP2K6 (tyrosine 182). Disordered stretches follow at residues 311 to 331 and 343 to 364; these read YHDP…EAKE and QEVL…EIEQ. Positions 314–326 are enriched in acidic residues; the sequence is PEDEPEAEPYDES. Tyrosine 323 carries the post-translational modification Phosphotyrosine; by ZAP70.

Belongs to the protein kinase superfamily. CMGC Ser/Thr protein kinase family. MAP kinase subfamily. As to quaternary structure, interacts with HDAC3 and DUSP16. It depends on Mg(2+) as a cofactor. In terms of processing, dually phosphorylated on Thr-180 and Tyr-182 by MAP2K3/MKK3, MAP2K4/MKK4 and MAP2K6/MKK6, which activates the enzyme. As to expression, highest levels in the brain and heart. Also expressed in the placenta, lung, liver, skeletal muscle, kidney and pancreas.

The protein localises to the cytoplasm. Its subcellular location is the nucleus. It carries out the reaction L-seryl-[protein] + ATP = O-phospho-L-seryl-[protein] + ADP + H(+). The catalysed reaction is L-threonyl-[protein] + ATP = O-phospho-L-threonyl-[protein] + ADP + H(+). With respect to regulation, activated by phosphorylation on threonine and tyrosine by MAP2K3/MKK3, MAP2K4/MKK4 and MAP2K6/MKK6. MAP2K3/MKK3 and MAP2K6/MKK6 are both essential for the activation of MAPK11 induced by environmental stress. HDAC3 interacts directly and selectively with MAPK11 to repress ATF2 transcriptional activity, and regulate TNF gene expression in LPS-stimulated cells. Inhibited by SB203580 and pyridinyl-imidazole related compounds. Its function is as follows. Serine/threonine kinase which acts as an essential component of the MAP kinase signal transduction pathway. MAPK11 is one of the four p38 MAPKs which play an important role in the cascades of cellular responses evoked by extracellular stimuli such as pro-inflammatory cytokines or physical stress leading to direct activation of transcription factors. Accordingly, p38 MAPKs phosphorylate a broad range of proteins and it has been estimated that they may have approximately 200 to 300 substrates each. MAPK11 functions are mostly redundant with those of MAPK14. Some of the targets are downstream kinases which are activated through phosphorylation and further phosphorylate additional targets. RPS6KA5/MSK1 and RPS6KA4/MSK2 can directly phosphorylate and activate transcription factors such as CREB1, ATF1, the NF-kappa-B isoform RELA/NFKB3, STAT1 and STAT3, but can also phosphorylate histone H3 and the nucleosomal protein HMGN1. RPS6KA5/MSK1 and RPS6KA4/MSK2 play important roles in the rapid induction of immediate-early genes in response to stress or mitogenic stimuli, either by inducing chromatin remodeling or by recruiting the transcription machinery. On the other hand, two other kinase targets, MAPKAPK2/MK2 and MAPKAPK3/MK3, participate in the control of gene expression mostly at the post-transcriptional level, by phosphorylating ZFP36 (tristetraprolin) and ELAVL1, and by regulating EEF2K, which is important for the elongation of mRNA during translation. MKNK1/MNK1 and MKNK2/MNK2, two other kinases activated by p38 MAPKs, regulate protein synthesis by phosphorylating the initiation factor EIF4E2. In the cytoplasm, the p38 MAPK pathway is an important regulator of protein turnover. For example, CFLAR is an inhibitor of TNF-induced apoptosis whose proteasome-mediated degradation is regulated by p38 MAPK phosphorylation. Ectodomain shedding of transmembrane proteins is regulated by p38 MAPKs as well. In response to inflammatory stimuli, p38 MAPKs phosphorylate the membrane-associated metalloprotease ADAM17. Such phosphorylation is required for ADAM17-mediated ectodomain shedding of TGF-alpha family ligands, which results in the activation of EGFR signaling and cell proliferation. Additional examples of p38 MAPK substrates are the FGFR1. FGFR1 can be translocated from the extracellular space into the cytosol and nucleus of target cells, and regulates processes such as rRNA synthesis and cell growth. FGFR1 translocation requires p38 MAPK activation. In the nucleus, many transcription factors are phosphorylated and activated by p38 MAPKs in response to different stimuli. Classical examples include ATF1, ATF2, ATF6, ELK1, PTPRH, DDIT3, TP53/p53 and MEF2C and MEF2A. The p38 MAPKs are emerging as important modulators of gene expression by regulating chromatin modifiers and remodelers. The promoters of several genes involved in the inflammatory response, such as IL6, IL8 and IL12B, display a p38 MAPK-dependent enrichment of histone H3 phosphorylation on 'Ser-10' (H3S10ph) in LPS-stimulated myeloid cells. This phosphorylation enhances the accessibility of the cryptic NF-kappa-B-binding sites marking promoters for increased NF-kappa-B recruitment. Phosphorylates NLRP1 downstream of MAP3K20/ZAK in response to UV-B irradiation and ribosome collisions, promoting activation of the NLRP1 inflammasome and pyroptosis. Phosphorylates methyltransferase DOT1L on 'Ser-834', 'Thr-900', 'Ser-902', 'Thr-984', 'Ser-1001', 'Ser-1009' and 'Ser-1104'. The polypeptide is Mitogen-activated protein kinase 11 (MAPK11) (Homo sapiens (Human)).